The following is a 330-amino-acid chain: Putative [LysW]-L-2-aminoadipate/[LysW]-L-glutamate phosphate reductase (330 aa).

10-13 (SGYI) is an NADP(+) binding site. The active site involves cysteine 142. Asparagine 297 contributes to the NADP(+) binding site.

It belongs to the NAGSA dehydrogenase family. Type 1 subfamily. LysY sub-subfamily.

It is found in the cytoplasm. The enzyme catalyses [amino-group carrier protein]-C-terminal-N-(1-carboxy-5-oxopentan-1-yl)-L-glutamine + phosphate + NADP(+) = [amino-group carrier protein]-C-terminal-N-(1-carboxy-5-phosphooxy-5-oxopentan-1-yl)-L-glutamine + NADPH + H(+). The catalysed reaction is [amino-group carrier protein]-C-terminal-gamma-(L-glutamyl-5-semialdehyde)-L-glutamate + phosphate + NADP(+) = [amino-group carrier protein]-C-terminal-gamma-(5-phospho-L-glutamyl)-L-glutamate + NADPH + H(+). It functions in the pathway amino-acid biosynthesis; L-lysine biosynthesis via AAA pathway; L-lysine from L-alpha-aminoadipate (Thermus route): step 3/5. The protein operates within amino-acid biosynthesis; L-arginine biosynthesis. In terms of biological role, involved in both the arginine and lysine biosynthetic pathways. The sequence is that of Putative [LysW]-L-2-aminoadipate/[LysW]-L-glutamate phosphate reductase from Pyrococcus horikoshii (strain ATCC 700860 / DSM 12428 / JCM 9974 / NBRC 100139 / OT-3).